Reading from the N-terminus, the 309-residue chain is tRNA uridine(34) hydroxylase (309 aa).

In terms of domain architecture, Rhodanese spans 130–225; that stretch reads RGEEVVFFDG…YGEKYGNDGL (96 aa). Cysteine 185 acts as the Cysteine persulfide intermediate in catalysis.

This sequence belongs to the TrhO family.

The catalysed reaction is uridine(34) in tRNA + AH2 + O2 = 5-hydroxyuridine(34) in tRNA + A + H2O. Functionally, catalyzes oxygen-dependent 5-hydroxyuridine (ho5U) modification at position 34 in tRNAs. This chain is tRNA uridine(34) hydroxylase, found in Corynebacterium aurimucosum (strain ATCC 700975 / DSM 44827 / CIP 107346 / CN-1) (Corynebacterium nigricans).